The sequence spans 344 residues: Olfactory receptor class A-like protein 4 (344 aa).

At 1–10 (MSEVLTVDAV) the chain is on the extracellular side. The helical transmembrane segment at 11-31 (LFGLLVFSGIIGNIMVIYVVF) threads the bilayer. The Cytoplasmic portion of the chain corresponds to 32–47 (DCAKLCASRHLPPSDT). The helical transmembrane segment at 48–68 (ILVHLCLANLLTSVFRTVPIF) threads the bilayer. Over 69–84 (VSDLGLQVWLTAGWCR) the chain is Extracellular. An intrachain disulfide couples cysteine 83 to cysteine 169. The helical transmembrane segment at 85-105 (VFMLLWVWWRAVGCWVTLALS) threads the bilayer. Residues 106-130 (AFHCATLRRQHVSMGPLGHSRERRR) are Cytoplasmic-facing. Residues 131 to 151 (VWVVLAVVWAANLLFSLPALV) traverse the membrane as a helical segment. Residues 152–186 (YTTQVRGNATVELMVISCTTRPLLGCVWEFPTFQQ) lie on the Extracellular side of the membrane. N-linked (GlcNAc...) asparagine glycosylation occurs at asparagine 159. A helical transmembrane segment spans residues 187 to 207 (GYAFASSSLALNEVLPLVLMV). Residues 208–246 (GTNLATLQALGKHIRTVRAGGSTGAELDRHVSSERKAGH) lie on the Cytoplasmic side of the membrane. A helical transmembrane segment spans residues 247 to 267 (VIMALVALFVGCWVLQVAAVT). The Extracellular portion of the chain corresponds to 268–279 (YYNHNRGAHAEG). A helical transmembrane segment spans residues 280-300 (LLTVAHFSASLFVGFSPLVVA). At 301-344 (LGHGKLRRRISGILQSCMHRLKQTQDKPAEITEKDGRTTQSAMK) the chain is on the cytoplasmic side. The segment covering 324-337 (TQDKPAEITEKDGR) has biased composition (basic and acidic residues). The tract at residues 324 to 344 (TQDKPAEITEKDGRTTQSAMK) is disordered.

It belongs to the G-protein coupled receptor 1 family. Highly expressed in the olfactory rosette. Specifically localizes to crypt neurons in the olfactory neuroepithelium. Colocalizes with the inhibitory G-protein gnaia in crypt neurons. Not detected in other tissues tested.

Its subcellular location is the cell membrane. Its function is as follows. Probable olfactory receptor. The protein is Olfactory receptor class A-like protein 4 (ora4) of Danio rerio (Zebrafish).